We begin with the raw amino-acid sequence, 224 residues long: DNA mismatch repair protein MutH (224 aa).

This sequence belongs to the MutH family.

The protein resides in the cytoplasm. In terms of biological role, sequence-specific endonuclease that cleaves unmethylated GATC sequences. It is involved in DNA mismatch repair. The chain is DNA mismatch repair protein MutH from Histophilus somni (strain 129Pt) (Haemophilus somnus).